The following is a 120-amino-acid chain: Ribosome-binding factor A (120 aa).

The protein belongs to the RbfA family. Monomer. Binds 30S ribosomal subunits, but not 50S ribosomal subunits or 70S ribosomes.

Its subcellular location is the cytoplasm. One of several proteins that assist in the late maturation steps of the functional core of the 30S ribosomal subunit. Associates with free 30S ribosomal subunits (but not with 30S subunits that are part of 70S ribosomes or polysomes). Required for efficient processing of 16S rRNA. May interact with the 5'-terminal helix region of 16S rRNA. This is Ribosome-binding factor A from Rickettsia rickettsii (strain Iowa).